An 807-amino-acid polypeptide reads, in one-letter code: MSGWPRIYYKLLNLPLSILVKSKSIPADPAPELGLDTSRPIMYVLPYNSKADLLTLRAQCLAHDLPDPLEPLEIDGMLLPRYVFIHGGPRVFTYYTPKEESIKLFHDYLDLHRSNPNLDVQMVPVSVMFGRAPGREKGEVNPPLRMLNGVQKFFAVLWLGRDSFVRFSPSVSLRRMADEHGTDKTIAQKLARVARMHFARQRLAAVGPRLPARQDLFNKLLASRAIAKAVEDEAHSKKISHEKAQQNAIALMEEIAANFSYEMIRLTDRILGFTWNRLYQGINVHNAERVRQLAHDGHELVYVPCHRSHMDYLLLSYVLYHQGLVPPHIAAGINLNFWPAGPIFRRLGAFFIRRTFKGNKLYSTVFREYLGELFSRGYSVEYFVEGGRSRTGRLLDPKTGTLSMTIQAMLRGGTRPITLIPIYIGYEHVMEVGTYAKELRGATKEKESLPQMLRGLSKLRNLGQGYVNFGEPMPLMTYLNQHVPDWRESIDPIEAVRPAWLTPTVNNIAADLMVRINNAGAANAMNLCCTALLASRQRSLTREQLTEQLNCYLDLMRNVPYSTDSTVPSASASELIDHALQMNKFEVEKDTIGDIIILPREQAVLMTYYRNNIAHMLVLPSLMAAIVTQHRHISRDVLMEHVNVLYPMLKAELFLRWDRDELPDVIDALANEMQRQGLITLQDDELHINPSHSRTLQLLAAGARETLQRYAITFWLLSANPSINRGTLEKESRTVAQRLSVLHGINAPEFFDKAVFSSLVLTLRDEGYISDSGDAEPAETMKVYQLLAELITSDVRLTIESATQGEG.

The HXXXXD motif motif lies at 305 to 310 (CHRSHM).

This sequence belongs to the GPAT/DAPAT family.

It localises to the cell inner membrane. It carries out the reaction sn-glycerol 3-phosphate + an acyl-CoA = a 1-acyl-sn-glycero-3-phosphate + CoA. It participates in phospholipid metabolism; CDP-diacylglycerol biosynthesis; CDP-diacylglycerol from sn-glycerol 3-phosphate: step 1/3. This is Glycerol-3-phosphate acyltransferase from Shigella boydii serotype 18 (strain CDC 3083-94 / BS512).